Here is a 343-residue protein sequence, read N- to C-terminus: Heat-inducible transcription repressor HrcA (343 aa).

Belongs to the HrcA family.

Negative regulator of class I heat shock genes (grpE-dnaK-dnaJ and groELS operons). Prevents heat-shock induction of these operons. This is Heat-inducible transcription repressor HrcA from Lysinibacillus sphaericus (Bacillus sphaericus).